Here is a 535-residue protein sequence, read N- to C-terminus: Butyrophilin-like protein 9 (535 aa).

A signal peptide spans 1–34 (MVDLSVSPDSLKPVSLTSSLVFLMHLLLLQPGEP). Topologically, residues 35–256 (SSEVKVLGPE…VFVPGASAWK (222 aa)) are extracellular. Residues 54–135 (EVEFPCHLWP…SDKGTYGCRF (82 aa)) form the Ig-like V-type domain. A disulfide bridge links Cys59 with Cys133. Asn102, Asn139, and Asn224 each carry an N-linked (GlcNAc...) asparagine glycan. A helical transmembrane segment spans residues 257–277 (SAFVATLPLLLVLAALALGVL). Residues 276–315 (VLRKQRRSREKLRKQAEKRQEKLTAELEKLQTELDWRRAE) are a coiled coil. Residues 278-535 (RKQRRSREKL…EPADPALDWW (258 aa)) lie on the Cytoplasmic side of the membrane. The 200-residue stretch at 310–509 (DWRRAEGQAE…LTICPLPVRG (200 aa)) folds into the B30.2/SPRY domain. The disordered stretch occupies residues 340-367 (SLEVSEDGKSVSSRGAPPGPAPGHPQRF).

It belongs to the immunoglobulin superfamily. BTN/MOG family.

It localises to the membrane. This is Butyrophilin-like protein 9 (BTNL9) from Homo sapiens (Human).